The sequence spans 449 residues: Tubulin alpha chain (449 aa).

The MREC motif motif lies at 1 to 4 (MREC). Glutamine 11 serves as a coordination point for GTP. Lysine 40 is modified (N6-acetyllysine). GTP contacts are provided by glutamate 71, serine 140, glycine 144, threonine 145, threonine 179, asparagine 206, and asparagine 228. Glutamate 71 serves as a coordination point for Mg(2+). Glutamate 254 is a catalytic residue. Glutamate 443 carries the post-translational modification 5-glutamyl polyglutamate.

This sequence belongs to the tubulin family. In terms of assembly, dimer of alpha and beta chains. A typical microtubule is a hollow water-filled tube with an outer diameter of 25 nm and an inner diameter of 15 nM. Alpha-beta heterodimers associate head-to-tail to form protofilaments running lengthwise along the microtubule wall with the beta-tubulin subunit facing the microtubule plus end conferring a structural polarity. Microtubules usually have 13 protofilaments but different protofilament numbers can be found in some organisms and specialized cells. Mg(2+) is required as a cofactor. Some glutamate residues at the C-terminus are polyglycylated, resulting in polyglycine chains on the gamma-carboxyl group. Glycylation is mainly limited to tubulin incorporated into axonemes (cilia and flagella) whereas glutamylation is prevalent in neuronal cells, centrioles, axonemes, and the mitotic spindle. Both modifications can coexist on the same protein on adjacent residues, and lowering polyglycylation levels increases polyglutamylation, and reciprocally. The precise function of polyglycylation is still unclear. Post-translationally, some glutamate residues at the C-terminus are polyglutamylated, resulting in polyglutamate chains on the gamma-carboxyl group. Polyglutamylation plays a key role in microtubule severing by spastin (SPAST). SPAST preferentially recognizes and acts on microtubules decorated with short polyglutamate tails: severing activity by SPAST increases as the number of glutamates per tubulin rises from one to eight, but decreases beyond this glutamylation threshold. In terms of processing, acetylation of alpha chains at Lys-40 is located inside the microtubule lumen. This modification has been correlated with increased microtubule stability, intracellular transport and ciliary assembly. Undergoes a tyrosination/detyrosination cycle, the cyclic removal and re-addition of a C-terminal tyrosine residue by the enzymes tubulin tyrosine carboxypeptidase (MATCAP1, VASH1 or VASH2) and tubulin tyrosine ligase (TTL), respectively. Post-translationally, tyrosination promotes microtubule interaction with CAP-Gly microtubule plus-end tracking proteins. Tyrosinated tubulins regulate the initiation of dynein-driven motility. In terms of processing, detyrosination is involved in metaphase plate congression by guiding chromosomes during mitosis. Detyrosination increases microtubules-dependent mechanotransduction in dystrophic cardiac and skeletal muscle. In cardiomyocytes, detyrosinated microtubules are required to resist to contractile compression during contraction.

The protein resides in the cytoplasm. It is found in the cytoskeleton. The enzyme catalyses GTP + H2O = GDP + phosphate + H(+). Tubulin is the major constituent of microtubules, a cylinder consisting of laterally associated linear protofilaments composed of alpha- and beta-tubulin heterodimers. Microtubules grow by the addition of GTP-tubulin dimers to the microtubule end, where a stabilizing cap forms. Below the cap, tubulin dimers are in GDP-bound state, owing to GTPase activity of alpha-tubulin. The protein is Tubulin alpha chain (tuba) of Xenopus tropicalis (Western clawed frog).